Consider the following 767-residue polypeptide: Receptor-type tyrosine-protein phosphatase-like ida-1 (767 aa).

A signal peptide spans 1–19 (MRFFHSIIVLLFSISTGSA). Topologically, residues 20–398 (FLLYGCNLSE…SLPVESSERD (379 aa)) are lumenal. Residues N26 and N146 are each glycosylated (N-linked (GlcNAc...) asparagine). Residues 399–419 (WLLMPVLFVCAFTVTALGLVA) form a helical membrane-spanning segment. Residues 420 to 767 (AVQIARSRRH…NHLLKSIATK (348 aa)) lie on the Cytoplasmic side of the membrane. Residues 527–756 (SQNRTILPFD…KLVYGCVAQE (230 aa)) form the Tyrosine-protein phosphatase domain.

This sequence belongs to the protein-tyrosine phosphatase family. Receptor class 8 subfamily. Post-translationally, proteolytically cleaved probably at a dibasic consensus sequence by egl-3. In hermaphrodites specifically expressed in neurons and in particular in the head nerve ring (ADE, ALA, ASI, ASK, AUA, ASG, AVH and AVJ neurons), in the ventral nerve cord, pre-anal ganglia (PVP neuron), in the tail (PHA, PHB and PHC neurons) and in vulval motor neurons VC and HSN and the vulval uv1 cells. In males, also expressed in neurons anterior to the nerve ring and male-specific neurons in the tail.

It is found in the cytoplasmic vesicle membrane. The protein resides in the perikaryon. The protein localises to the cell projection. Its subcellular location is the axon. It localises to the dendrite. Functionally, regulates dense-core vesicle (DCV) trafficking and/or secretion. Probably by controlling DCV trafficking, plays a role in the AVG neuron-mediated formation of the right axon tract of the ventral nerve cord. Involved in locomotion by regulating acetylcholine release. Probably by controlling the secretion of FLP neuropeptides, regulates the turning step of male mating behavior. Plays a role in preventing dauer formation. The sequence is that of Receptor-type tyrosine-protein phosphatase-like ida-1 from Caenorhabditis elegans.